The chain runs to 154 residues: Vimentin (154 aa).

A compositionally biased stretch (low complexity) spans 1–13 (MSTRSVSSSSYRR). Residues 1-31 (MSTRSVSSSSYRRMFGGPGTASRPSSTRSYV) are disordered. Ser-2 is subject to N-acetylserine. Positions 2–95 (STRSVSSSSY…FSLADAINTE (94 aa)) are head. Ser-5 carries the phosphoserine modification. At Ser-7 the chain carries Phosphoserine; by PKA and PKC; alternate. A glycan (O-linked (GlcNAc) serine; alternate) is linked at Ser-7. Phosphoserine is present on Ser-8. Ser-9 and Ser-10 each carry phosphoserine; by PKC. Thr-20 bears the Phosphothreonine mark. Ser-25 is subject to Phosphoserine; by PKA and PKC. Phosphoserine; by PKC is present on Ser-26. An O-linked (GlcNAc) threonine glycan is attached at Thr-33. Ser-34 carries an O-linked (GlcNAc) serine; alternate glycan. At Ser-34 the chain carries Phosphoserine; by PKC; alternate. Ser-39 is subject to Phosphoserine; by CaMK2, PKA, PKC and ROCK2. Ser-42 carries the post-translational modification Phosphoserine; by PKC. Ser-49 is modified (phosphoserine). Residue Tyr-53 is modified to Phosphotyrosine. Ser-55 is modified (phosphoserine). Ser-56 bears the Phosphoserine; by CDK5 and CDK1 mark. Position 61 is a phosphotyrosine (Tyr-61). Ser-66 is subject to Phosphoserine; by PKA and PKC. At Ser-72 the chain carries Phosphoserine; by AURKB and ROCK2. Ser-83 bears the Phosphoserine; by CaMK2 mark. At Ser-87 the chain carries Phosphoserine. The coil 1A stretch occupies residues 96-131 (FKNTRTNEKVELQELNDRFANYIDKVRFLEQQNKIL). Residues 96–131 (FKNTRTNEKVELQELNDRFANYIDKVRFLEQQNKIL) adopt a coiled-coil conformation. The 52-residue stretch at 103–154 (EKVELQELNDRFANYIDKVRFLEQQNKILLAELEQLKGQGKSRLGHLYEEEM) folds into the IF rod domain. A Glycyl lysine isopeptide (Lys-Gly) (interchain with G-Cter in SUMO2) cross-link involves residue Lys-104. At Tyr-117 the chain carries Phosphotyrosine. An N6-acetyllysine; alternate mark is found at Lys-120, Lys-129, and Lys-139. An N6-succinyllysine; alternate mark is found at Lys-120 and Lys-129. Glycyl lysine isopeptide (Lys-Gly) (interchain with G-Cter in SUMO2); alternate cross-links involve residues Lys-120, Lys-129, and Lys-139. The interval 132-153 (LAELEQLKGQGKSRLGHLYEEE) is linker 1. The residue at position 144 (Ser-144) is a Phosphoserine. A region of interest (coil 1B) is located at residue Met-154.

Belongs to the intermediate filament family. As to quaternary structure, homomer assembled from elementary dimers. Identified in complexes that contain VIM, EZR, AHNAK, BFSP1, BFSP2, ANK2, PLEC, PRX and spectrin. Interacts with BCAS3. Interacts with LGSN. Interacts with SYNM. Interacts (via rod region) with PLEC (via CH 1 domain). Interacts with STK33. Interacts with LARP6. Interacts with RAB8B. Interacts with TOR1A; the interaction associates TOR1A with the cytoskeleton. Interacts with TOR1AIP1. Interacts with TOR1AIP1. Interacts with DIAPH1. Interacts with EPPK1; interaction is dependent of higher-order structure of intermediate filament. Interacts with the non-receptor tyrosine kinase SRMS; the interaction leads to phosphorylation of VIM. Interacts with NOD2. Interacts (via head region) with CORO1C. Interacts with HDGF. Interacts with PRKCE (via phorbol-ester/DAG-type 2 domain). Interacts with BFSP2. Interacts with PPL. Interacts with PKP1 and PKP2. Interacts with SCRIB (via PDZ domains); the interaction protects SCRIB from proteasomal degradation and facilitates SCRIB localization to intermediate filaments, the interaction is reduced by cell contact inhibition. One of the most prominent phosphoproteins in various cells of mesenchymal origin. Phosphorylation is enhanced during cell division, at which time vimentin filaments are significantly reorganized. Phosphorylation by PKN1 inhibits the formation of filaments. Filament disassembly during mitosis is promoted by phosphorylation at Ser-55 as well as by nestin. Phosphorylated at Ser-56 by CDK5 during neutrophil secretion in the cytoplasm. Phosphorylated by STK33. Phosphorylated on tyrosine residues by SRMS.

Its subcellular location is the cytoplasm. It localises to the cytoskeleton. The protein resides in the nucleus matrix. It is found in the cell membrane. In terms of biological role, vimentins are class-III intermediate filaments found in various non-epithelial cells, especially mesenchymal cells. Vimentin is attached to the nucleus, endoplasmic reticulum, and mitochondria, either laterally or terminally. Plays a role in cell directional movement, orientation, cell sheet organization and Golgi complex polarization at the cell migration front. Protects SCRIB from proteasomal degradation and facilitates its localization to intermediate filaments in a cell contact-mediated manner. Functionally, involved with LARP6 in the stabilization of type I collagen mRNAs for CO1A1 and CO1A2. In Ovis aries (Sheep), this protein is Vimentin (VIM).